Consider the following 364-residue polypeptide: Esculetin O-methyltransferase (364 aa).

Asn132 provides a ligand contact to bergaptol. S-adenosyl-L-homocysteine is bound by residues Gly209, Asp232, Asp252, Met253, Met265, and Lys266. Bergaptol is bound at residue His270. Catalysis depends on His270, which acts as the Proton acceptor.

Belongs to the class I-like SAM-binding methyltransferase superfamily. Cation-independent O-methyltransferase family. COMT subfamily. Homodimer. Expressed ubiquitously.

The enzyme catalyses bergaptol + S-adenosyl-L-methionine = bergapten + S-adenosyl-L-homocysteine. It carries out the reaction xanthotoxol + S-adenosyl-L-methionine = xanthotoxin + S-adenosyl-L-homocysteine + H(+). The catalysed reaction is esculetin + S-adenosyl-L-methionine = isoscopoletin + S-adenosyl-L-homocysteine + H(+). It catalyses the reaction esculetin + S-adenosyl-L-methionine = scopoletin + S-adenosyl-L-homocysteine + H(+). The protein operates within aromatic compound metabolism. It participates in secondary metabolite biosynthesis. With respect to regulation, inhibited by zinc Zn(2+), copper Cu(2+) and silver Ag(+) ions. Functionally, O-methyltransferase involved in the biosynthesis of methoxylated coumarins natural products such as isoscopoletin, scopoletin, xanthotoxin and bergapten, photosensitizers used for medical purpose such as treating psoriasis and vitiligo or facilitating resistance to microbial infection and other stresses. Catalyzes the methylation of esculetin, bergaptol and xanthotoxol, but seems inactive on scopoletin and isoscopoletin. The polypeptide is Esculetin O-methyltransferase (Kitagawia praeruptora (Peucedanum praeruptorum)).